The following is a 262-amino-acid chain: Polyamine aminopropyltransferase (262 aa).

The 249-residue stretch at 1–249 (MWITQEITPY…DIHRAAFALP (249 aa)) folds into the PABS domain. Asn-29 contacts S-methyl-5'-thioadenosine. Asp-83 is a binding site for spermidine. Asp-155 functions as the Proton acceptor in the catalytic mechanism.

This sequence belongs to the spermidine/spermine synthase family. In terms of assembly, homodimer or homotetramer.

It localises to the cytoplasm. The catalysed reaction is S-adenosyl 3-(methylsulfanyl)propylamine + putrescine = S-methyl-5'-thioadenosine + spermidine + H(+). The protein operates within amine and polyamine biosynthesis; spermidine biosynthesis; spermidine from putrescine: step 1/1. Functionally, catalyzes the irreversible transfer of a propylamine group from the amino donor S-adenosylmethioninamine (decarboxy-AdoMet) to putrescine (1,4-diaminobutane) to yield spermidine. The chain is Polyamine aminopropyltransferase from Helicobacter pylori (strain P12).